The chain runs to 397 residues: Phosphoglycerate kinase (397 aa).

Residues 22–24, arginine 37, 60–63, arginine 119, and arginine 152 contribute to the substrate site; these read DLN and HFGR. Residues lysine 202, glutamate 324, and 354–357 each bind ATP; that span reads GGDT.

The protein belongs to the phosphoglycerate kinase family. In terms of assembly, monomer.

Its subcellular location is the cytoplasm. The catalysed reaction is (2R)-3-phosphoglycerate + ATP = (2R)-3-phospho-glyceroyl phosphate + ADP. It functions in the pathway carbohydrate degradation; glycolysis; pyruvate from D-glyceraldehyde 3-phosphate: step 2/5. This Zymomonas mobilis subsp. mobilis (strain ATCC 31821 / ZM4 / CP4) protein is Phosphoglycerate kinase (pgk).